The primary structure comprises 326 residues: GTPase Obg (326 aa).

The Obg domain maps to 1–159 (MKFVDSAKIY…LEIELELKLM (159 aa)). Positions 119 to 138 (EGGKGGKGNPHFASSTRQAP) are disordered. In terms of domain architecture, OBG-type G spans 160 to 323 (ADVGLVGFPN…LKDELWSRVK (164 aa)). GTP contacts are provided by residues 166–173 (GFPNAGKS), 191–195 (FTTLV), 213–216 (DIPG), 280–283 (TKMD), and 304–306 (SSV). Mg(2+)-binding residues include Ser-173 and Thr-193.

Belongs to the TRAFAC class OBG-HflX-like GTPase superfamily. OBG GTPase family. Monomer. The cofactor is Mg(2+).

The protein resides in the cytoplasm. An essential GTPase which binds GTP, GDP and possibly (p)ppGpp with moderate affinity, with high nucleotide exchange rates and a fairly low GTP hydrolysis rate. Plays a role in control of the cell cycle, stress response, ribosome biogenesis and in those bacteria that undergo differentiation, in morphogenesis control. This is GTPase Obg from Chlorobium phaeobacteroides (strain BS1).